The chain runs to 399 residues: Semaphorin-like protein 139 (399 aa).

Residues 1–14 form the signal peptide; that stretch reads MIPLLFILFYFTNC. A Sema domain is found at 15–399; that stretch reads IEWHKFETSE…IPRMKKILKM (385 aa).

This sequence belongs to the semaphorin family. In terms of assembly, interacts with host VESPR.

It localises to the secreted. Functionally, acts as a semaphorin-like protein and binds to host plexin C1 receptor. May alter the movement of plexin C1-expressing cells including dendritic cells, monocytes, or granulocytes in the proximity of infected cells. May also regulate host cell cytoskeleton of neighboring cells to improve viral infection. This Ectromelia virus (strain Moscow) (ECTV) protein is Semaphorin-like protein 139 (EVM139).